A 695-amino-acid polypeptide reads, in one-letter code: Elongation factor G (695 aa).

Residues 10–289 enclose the tr-type G domain; the sequence is KNLRNIGIMA…AVVAWMPSPL (280 aa). GTP-binding positions include 19-26, 83-87, and 137-140; these read AHIDAGKT, DTPGH, and NKMD.

It belongs to the TRAFAC class translation factor GTPase superfamily. Classic translation factor GTPase family. EF-G/EF-2 subfamily.

It localises to the cytoplasm. In terms of biological role, catalyzes the GTP-dependent ribosomal translocation step during translation elongation. During this step, the ribosome changes from the pre-translocational (PRE) to the post-translocational (POST) state as the newly formed A-site-bound peptidyl-tRNA and P-site-bound deacylated tRNA move to the P and E sites, respectively. Catalyzes the coordinated movement of the two tRNA molecules, the mRNA and conformational changes in the ribosome. The protein is Elongation factor G of Protochlamydia amoebophila (strain UWE25).